The chain runs to 343 residues: Ribosomal RNA small subunit methyltransferase C (343 aa).

The protein belongs to the methyltransferase superfamily. RsmC family. Monomer.

The protein localises to the cytoplasm. The catalysed reaction is guanosine(1207) in 16S rRNA + S-adenosyl-L-methionine = N(2)-methylguanosine(1207) in 16S rRNA + S-adenosyl-L-homocysteine + H(+). In terms of biological role, specifically methylates the guanine in position 1207 of 16S rRNA in the 30S particle. This Escherichia coli O157:H7 protein is Ribosomal RNA small subunit methyltransferase C.